Here is a 207-residue protein sequence, read N- to C-terminus: Ras-related protein Rab-8B (207 aa).

GTP contacts are provided by S17, G18, V19, G20, K21, T22, C23, T35, S39, and T40. Mg(2+) is bound at residue T22. Short sequence motifs (switch) lie at residues 31 to 45 (DAFNTTFISTIGIDF) and 63 to 80 (DTAGQERFRTITTAYYRG). Positions 40 and 63 each coordinate Mg(2+). G66 contributes to the GTP binding site. A Phosphothreonine; by LRRK2 modification is found at T72. GTP-binding residues include N121, K122, D124, A152, and K153. A Phosphoserine modification is found at S180. C204 carries the cysteine methyl ester modification. C204 carries the S-geranylgeranyl cysteine lipid modification. A propeptide spans 205–207 (SLL) (removed in mature form).

The protein belongs to the small GTPase superfamily. Rab family. As to quaternary structure, associated with actin, delta-catenin and alpha and beta tubulins. Interacts with OTOF. Interacts with PEX5R. Interacts with RAB3IP. Interacts with VIM. Interacts with CDH1. Interacts with MICALL2. Interacts with GDI1, GDI2, CHML and CHM; phosphorylation at Thr-72 disrupts these interactions. Interacts with MICAL1. Requires Mg(2+) as cofactor. In terms of processing, phosphorylation of Thr-72 in the switch II region by LRRK2 prevents the association of RAB regulatory proteins, including CHM, CHML and RAB GDP dissociation inhibitors GDI1 and GDI2.

It is found in the cell membrane. The protein resides in the cytoplasmic vesicle. It localises to the phagosome. Its subcellular location is the phagosome membrane. The protein localises to the endosome membrane. The catalysed reaction is GTP + H2O = GDP + phosphate + H(+). Its activity is regulated as follows. Regulated by guanine nucleotide exchange factors (GEFs) including RAB3IP/RABIN8 which promotes the exchange of bound GDP for free GTP. Regulated by GTPase activating proteins (GAPs) which increase the GTP hydrolysis activity. Inhibited by GDP dissociation inhibitors (GDIs). Functionally, the small GTPases Rab are key regulators of intracellular membrane trafficking, from the formation of transport vesicles to their fusion with membranes. Rabs cycle between an inactive GDP-bound form and an active GTP-bound form that is able to recruit to membranes different sets of downstream effectors directly responsible for vesicle formation, movement, tethering and fusion. RAB8B may be involved in polarized vesicular trafficking and neurotransmitter release. May participate in cell junction dynamics in Sertoli cells. May also participate in the export of a subset of neosynthesized proteins through a Rab8-Rab10-Rab11-dependent endososomal export route. The protein is Ras-related protein Rab-8B of Homo sapiens (Human).